Reading from the N-terminus, the 86-residue chain is DNA-directed RNA polymerase subunit omega (86 aa).

Positions 67 to 76 (SAREHAKESQ) are enriched in basic and acidic residues. The tract at residues 67 to 86 (SAREHAKESQVSEEEVREES) is disordered. Over residues 77–86 (VSEEEVREES) the composition is skewed to acidic residues.

Belongs to the RNA polymerase subunit omega family. As to quaternary structure, the RNAP catalytic core consists of 2 alpha, 1 beta, 1 beta' and 1 omega subunit. When a sigma factor is associated with the core the holoenzyme is formed, which can initiate transcription.

It catalyses the reaction RNA(n) + a ribonucleoside 5'-triphosphate = RNA(n+1) + diphosphate. In terms of biological role, promotes RNA polymerase assembly. Latches the N- and C-terminal regions of the beta' subunit thereby facilitating its interaction with the beta and alpha subunits. This Nitrosococcus oceani (strain ATCC 19707 / BCRC 17464 / JCM 30415 / NCIMB 11848 / C-107) protein is DNA-directed RNA polymerase subunit omega.